A 192-amino-acid polypeptide reads, in one-letter code: Elongation factor P (192 aa).

The protein belongs to the elongation factor P family.

The protein localises to the cytoplasm. It functions in the pathway protein biosynthesis; polypeptide chain elongation. In terms of biological role, involved in peptide bond synthesis. Stimulates efficient translation and peptide-bond synthesis on native or reconstituted 70S ribosomes in vitro. Probably functions indirectly by altering the affinity of the ribosome for aminoacyl-tRNA, thus increasing their reactivity as acceptors for peptidyl transferase. This is Elongation factor P from Borreliella afzelii (strain PKo) (Borrelia afzelii).